The sequence spans 372 residues: 3-dehydroquinate synthase (372 aa).

Residues 116-120, 140-141, lysine 153, lysine 162, and 180-183 contribute to the NAD(+) site; these read GVVGD, TT, and TLNT. Positions 195, 260, and 277 each coordinate Zn(2+).

Belongs to the sugar phosphate cyclases superfamily. Dehydroquinate synthase family. Co(2+) serves as cofactor. It depends on Zn(2+) as a cofactor. NAD(+) is required as a cofactor.

It localises to the cytoplasm. The catalysed reaction is 7-phospho-2-dehydro-3-deoxy-D-arabino-heptonate = 3-dehydroquinate + phosphate. Its pathway is metabolic intermediate biosynthesis; chorismate biosynthesis; chorismate from D-erythrose 4-phosphate and phosphoenolpyruvate: step 2/7. Catalyzes the conversion of 3-deoxy-D-arabino-heptulosonate 7-phosphate (DAHP) to dehydroquinate (DHQ). This Prochlorococcus marinus (strain MIT 9303) protein is 3-dehydroquinate synthase.